The following is a 576-amino-acid chain: Calmodulin-binding protein 60 B (576 aa).

Residues 1–25 (MMLPTKRPAPDHGDDERNEVMVPEP) form a disordered region. Positions 1-80 (MMLPTKRPAP…HPSSRPSLNR (80 aa)) are calmodulin-binding. The span at 8 to 25 (PAPDHGDDERNEVMVPEP) shows a compositional bias: basic and acidic residues. A DNA-binding region spans residues 150-273 (DERQDWTENE…AFHKRLAYKN (124 aa)).

The protein belongs to the plant ACBP60 protein family. As to quaternary structure, (Microbial infection) Interacts with V.dahliae SCP41. In terms of assembly, interacts with calmodulin (CaM).

The protein resides in the nucleus. In terms of biological role, transcription activator that binds DNA in a sequence-specific manner, likely 5'-GAAATTTTGG-3', to promote the expression of target genes. Required for pathogen resistance. This is Calmodulin-binding protein 60 B from Gossypium hirsutum (Upland cotton).